Here is a 1403-residue protein sequence, read N- to C-terminus: DNA-directed RNA polymerase subunit beta' (1403 aa).

Zn(2+) is bound by residues C71, C73, C86, and C89. Residues D462, D464, and D466 each coordinate Mg(2+). C811, C885, C892, and C895 together coordinate Zn(2+).

This sequence belongs to the RNA polymerase beta' chain family. The RNAP catalytic core consists of 2 alpha, 1 beta, 1 beta' and 1 omega subunit. When a sigma factor is associated with the core the holoenzyme is formed, which can initiate transcription. It depends on Mg(2+) as a cofactor. Zn(2+) is required as a cofactor.

It catalyses the reaction RNA(n) + a ribonucleoside 5'-triphosphate = RNA(n+1) + diphosphate. Functionally, DNA-dependent RNA polymerase catalyzes the transcription of DNA into RNA using the four ribonucleoside triphosphates as substrates. The sequence is that of DNA-directed RNA polymerase subunit beta' from Bartonella bacilliformis (strain ATCC 35685 / KC583 / Herrer 020/F12,63).